The primary structure comprises 467 residues: 3-isopropylmalate dehydratase large subunit (467 aa).

Residues Cys347, Cys408, and Cys411 each coordinate [4Fe-4S] cluster.

It belongs to the aconitase/IPM isomerase family. LeuC type 1 subfamily. As to quaternary structure, heterodimer of LeuC and LeuD. [4Fe-4S] cluster serves as cofactor.

It carries out the reaction (2R,3S)-3-isopropylmalate = (2S)-2-isopropylmalate. The protein operates within amino-acid biosynthesis; L-leucine biosynthesis; L-leucine from 3-methyl-2-oxobutanoate: step 2/4. Its function is as follows. Catalyzes the isomerization between 2-isopropylmalate and 3-isopropylmalate, via the formation of 2-isopropylmaleate. This is 3-isopropylmalate dehydratase large subunit from Bordetella bronchiseptica (strain ATCC BAA-588 / NCTC 13252 / RB50) (Alcaligenes bronchisepticus).